The following is a 757-amino-acid chain: Neutral ceramidase 2 (757 aa).

An N-terminal signal peptide occupies residues 1–25; that stretch reads MAVSLPLFQFILFLLLLLLSRTVYA. An N-linked (GlcNAc...) asparagine glycan is attached at Asn-311. The active-site Nucleophile is the Ser-330. 2 N-linked (GlcNAc...) asparagine glycosylation sites follow: Asn-348 and Asn-657.

Belongs to the neutral ceramidase family.

It is found in the secreted. The protein resides in the endoplasmic reticulum. Its subcellular location is the golgi apparatus. The catalysed reaction is an N-acylsphing-4-enine + H2O = sphing-4-enine + a fatty acid. Its function is as follows. Hydrolyzes the sphingolipid ceramide into sphingosine and free fatty acid. This Arabidopsis thaliana (Mouse-ear cress) protein is Neutral ceramidase 2.